The following is a 78-amino-acid chain: Exodeoxyribonuclease 7 small subunit (78 aa).

The protein belongs to the XseB family. As to quaternary structure, heterooligomer composed of large and small subunits.

The protein localises to the cytoplasm. The catalysed reaction is Exonucleolytic cleavage in either 5'- to 3'- or 3'- to 5'-direction to yield nucleoside 5'-phosphates.. Its function is as follows. Bidirectionally degrades single-stranded DNA into large acid-insoluble oligonucleotides, which are then degraded further into small acid-soluble oligonucleotides. This Synechococcus sp. (strain JA-2-3B'a(2-13)) (Cyanobacteria bacterium Yellowstone B-Prime) protein is Exodeoxyribonuclease 7 small subunit.